A 246-amino-acid chain; its full sequence is 1-(5-phosphoribosyl)-5-[(5-phosphoribosylamino)methylideneamino] imidazole-4-carboxamide isomerase (246 aa).

Residue D8 is the Proton acceptor of the active site. Residue D130 is the Proton donor of the active site.

Belongs to the HisA/HisF family.

It is found in the cytoplasm. The catalysed reaction is 1-(5-phospho-beta-D-ribosyl)-5-[(5-phospho-beta-D-ribosylamino)methylideneamino]imidazole-4-carboxamide = 5-[(5-phospho-1-deoxy-D-ribulos-1-ylimino)methylamino]-1-(5-phospho-beta-D-ribosyl)imidazole-4-carboxamide. Its pathway is amino-acid biosynthesis; L-histidine biosynthesis; L-histidine from 5-phospho-alpha-D-ribose 1-diphosphate: step 4/9. The chain is 1-(5-phosphoribosyl)-5-[(5-phosphoribosylamino)methylideneamino] imidazole-4-carboxamide isomerase from Hydrogenovibrio crunogenus (strain DSM 25203 / XCL-2) (Thiomicrospira crunogena).